Reading from the N-terminus, the 247-residue chain is Mitochondrial inner membrane protease ATP23 (247 aa).

H146 provides a ligand contact to a divalent metal cation. E147 is a catalytic residue. A divalent metal cation is bound at residue H150.

The protein belongs to the peptidase M76 family.

Its subcellular location is the mitochondrion inner membrane. Functionally, has a dual role in the assembly of mitochondrial ATPase. Acts as a protease that removes N-terminal residues of mitochondrial ATPase CF(0) subunit 6 at the intermembrane space side. Also involved in the correct assembly of the membrane-embedded ATPase CF(0) particle, probably mediating association of subunit 6 with the subunit 9 ring. The chain is Mitochondrial inner membrane protease ATP23 (ATP23) from Eremothecium gossypii (strain ATCC 10895 / CBS 109.51 / FGSC 9923 / NRRL Y-1056) (Yeast).